The primary structure comprises 288 residues: 4-hydroxybenzoate octaprenyltransferase (288 aa).

Helical transmembrane passes span 23-43 (IGSL…GRGI), 46-66 (AKIL…GCVV), 98-118 (ILFV…NSMT), 141-161 (LPQV…FAAV), 163-183 (ESLP…TVAY), 213-233 (LIIG…GWLM), 234-254 (NLGG…THQQ), and 268-288 (AFLN…ISYW).

Belongs to the UbiA prenyltransferase family. The cofactor is Mg(2+).

It localises to the cell inner membrane. It carries out the reaction all-trans-octaprenyl diphosphate + 4-hydroxybenzoate = 4-hydroxy-3-(all-trans-octaprenyl)benzoate + diphosphate. It participates in cofactor biosynthesis; ubiquinone biosynthesis. Catalyzes the prenylation of para-hydroxybenzoate (PHB) with an all-trans polyprenyl group. Mediates the second step in the final reaction sequence of ubiquinone-8 (UQ-8) biosynthesis, which is the condensation of the polyisoprenoid side chain with PHB, generating the first membrane-bound Q intermediate 3-octaprenyl-4-hydroxybenzoate. The sequence is that of 4-hydroxybenzoate octaprenyltransferase from Yersinia pseudotuberculosis serotype IB (strain PB1/+).